The chain runs to 107 residues: Putative double-stranded DNA mimic protein Asuc_1259 (107 aa).

It belongs to the putative dsDNA mimic protein family.

Its function is as follows. May act as a double-stranded DNA (dsDNA) mimic. Probably regulates the activity of a dsDNA-binding protein. The chain is Putative double-stranded DNA mimic protein Asuc_1259 from Actinobacillus succinogenes (strain ATCC 55618 / DSM 22257 / CCUG 43843 / 130Z).